Reading from the N-terminus, the 592-residue chain is MSKIHTDLKKIDPITVQVVLGSLENVAVEMGHKLARMSYSSIIRESEDFGCALVDVRGQQLCESSHSTPLQSGPIPGYIKGIREIMEDRNDTFNQGDVIMHNSPYHGASHGPDVGFCIPVFYKDELIGFSVTTAHHLDIGSSTPGSCGIVDAVDAYAEGLQFKAIKVYDQGVKNRYVWDILKDNIRAPKLVVGDMEAQIAAARIGAQRYIEIIEKYGLDTVQAASEELMNYSEKMMRDAIKKLPDGEYTAEGFLDGYLDSDDPAKKDLRINVTVKVDGSDLTVDLTGTSPQVTDKPINMPLLGTVDIAIYLTLRSILLDSTVYGNFPQNSGLIRPIKIVAPKGTLCNPIFPAPTIARFNSGNAVADTLMKALAQVVPHQVSAGVGNLQVVAFSGQSNENYWVYMDIMEGSYGGRYGKDGMDAVDTLYANTRNNPIEDIESHYPLRVNRYELRDNDSAPGKWRGGIGSIREVSFLADGSFSVEADGHKYAPWGFDDGQDGYVGSLSIRDNETNELVQLPSKLPNRHAQSGSTIQLVGPCGGGYGNPLEREPEKVLSDYLDGFITKEKALVEYGVTITDSEEIDYEKTNELRKV.

Belongs to the HyuB family. As to quaternary structure, may form a complex with HyuA.

Functionally, involved in the asymmetric conversion of racemic 5-substituted hydantoins to the corresponding L-amino acids. HyuA and HyuB are both required for the conversion of D- and L-5-substituted hydantoins to corresponding N-carbamoyl-D- and N-carbamoyl-L-amino acids, respectively. This Pseudomonas sp. (strain NS671) protein is Putative D-/L-hydantoinase subunit B.